The chain runs to 471 residues: Glutamate--tRNA ligase (471 aa).

Positions 9–19 (PSPTGYLHVGG) match the 'HIGH' region motif. C98, C100, C125, and H127 together coordinate Zn(2+). The 'KMSKS' region motif lies at 237–241 (KLSKR). An ATP-binding site is contributed by K240.

The protein belongs to the class-I aminoacyl-tRNA synthetase family. Glutamate--tRNA ligase type 1 subfamily. Monomer. The cofactor is Zn(2+).

The protein resides in the cytoplasm. The enzyme catalyses tRNA(Glu) + L-glutamate + ATP = L-glutamyl-tRNA(Glu) + AMP + diphosphate. Its function is as follows. Catalyzes the attachment of glutamate to tRNA(Glu) in a two-step reaction: glutamate is first activated by ATP to form Glu-AMP and then transferred to the acceptor end of tRNA(Glu). In Escherichia coli (strain ATCC 8739 / DSM 1576 / NBRC 3972 / NCIMB 8545 / WDCM 00012 / Crooks), this protein is Glutamate--tRNA ligase.